Reading from the N-terminus, the 465-residue chain is Pancreatic triacylglycerol lipase (465 aa).

A signal peptide spans 1-16; it reads MLLVWSLALLLGAVAG. 2 cysteine pairs are disulfide-bonded: C20–C26 and C107–C118. S169 acts as the Nucleophile in catalysis. D193 acts as the Charge relay system in catalysis. The Ca(2+) site is built by E204, R207, D209, and D212. C254 and C278 are joined by a disulfide. H280 (charge relay system) is an active-site residue. Disulfide bonds link C302-C313, C316-C321, and C449-C465. Residues 355-465 enclose the PLAT domain; that stretch reads WRYKVSVTLS…EDVLLTLNAC (111 aa).

Belongs to the AB hydrolase superfamily. Lipase family. Forms a 1:1 stoichiometric complex with (pro)colipase/CLPS. As to expression, expressed in many tissues with highest expression in liver. During hibernation there is a significant increases in expression in heart, white adipose tissue (WAT), and testis; but not in pancreas.

The protein localises to the secreted. The catalysed reaction is a triacylglycerol + H2O = a diacylglycerol + a fatty acid + H(+). It catalyses the reaction 1,2,3-tributanoylglycerol + H2O = dibutanoylglycerol + butanoate + H(+). It carries out the reaction 1,2,3-tri-(9Z-octadecenoyl)-glycerol + H2O = di-(9Z)-octadecenoylglycerol + (9Z)-octadecenoate + H(+). The enzyme catalyses all-trans-retinyl hexadecanoate + H2O = all-trans-retinol + hexadecanoate + H(+). The catalysed reaction is 1,2-di-(9Z-octadecenoyl)-glycerol + H2O = (9Z-octadecenoyl)-glycerol + (9Z)-octadecenoate + H(+). Its activity is regulated as follows. Inhibited by bile salts, is reactivated by (pro)colipase/CLPS. In terms of biological role, plays an important role in fat metabolism. It preferentially splits the esters of long-chain fatty acids at positions 1 and 3, producing mainly 2-monoacylglycerol and free fatty acids, and shows considerably higher activity against insoluble emulsified substrates than against soluble ones. Plays a role in hibernation as a key enzyme that shows high activity at low temperatures. When expressed in the hibernating heart it liberates fatty acids from triglycerides at temperatures as low as 0 degrees Celsius. The sequence is that of Pancreatic triacylglycerol lipase (PNLIP) from Ictidomys tridecemlineatus (Thirteen-lined ground squirrel).